The following is a 441-amino-acid chain: Ribosomal protein uS12 methylthiotransferase RimO (441 aa).

Residues glutamine 6–proline 116 enclose the MTTase N-terminal domain. [4Fe-4S] cluster contacts are provided by cysteine 15, cysteine 51, cysteine 80, cysteine 147, cysteine 151, and cysteine 154. A Radical SAM core domain is found at leucine 133–arginine 370. In terms of domain architecture, TRAM spans alanine 373–glycine 439.

This sequence belongs to the methylthiotransferase family. RimO subfamily. It depends on [4Fe-4S] cluster as a cofactor.

The protein resides in the cytoplasm. The enzyme catalyses L-aspartate(89)-[ribosomal protein uS12]-hydrogen + (sulfur carrier)-SH + AH2 + 2 S-adenosyl-L-methionine = 3-methylsulfanyl-L-aspartate(89)-[ribosomal protein uS12]-hydrogen + (sulfur carrier)-H + 5'-deoxyadenosine + L-methionine + A + S-adenosyl-L-homocysteine + 2 H(+). Its function is as follows. Catalyzes the methylthiolation of an aspartic acid residue of ribosomal protein uS12. The protein is Ribosomal protein uS12 methylthiotransferase RimO of Rhodospirillum rubrum (strain ATCC 11170 / ATH 1.1.1 / DSM 467 / LMG 4362 / NCIMB 8255 / S1).